A 620-amino-acid chain; its full sequence is Cilia- and flagella-associated protein 52 (620 aa).

11 WD repeats span residues 62 to 106 (GHGN…LIAR), 109 to 150 (LHKG…AICG), 156 to 195 (LNVG…RKIW), 288 to 327 (QLQG…ETLI), 330 to 369 (CHFE…ELLR), 372 to 411 (VPNM…LMYT), 415 to 454 (AHRI…QKLE), 459 to 498 (EHKS…RNQM), 500 to 541 (LANT…RELE), 543 to 582 (SLSG…VTHV), and 585 to 620 (GHSG…PFAS).

The protein belongs to the CFAP52 family. In terms of assembly, microtubule inner protein component of sperm flagellar doublet microtubules. Interacts with BRCA2. Interacts with the CCT chaperonin complex. Interacts with HSP70. Interacts with AK8. Interacts with CFAP45. Interacts with DNAI1. Interacts with IQDC.

It localises to the cytoplasm. The protein resides in the cytoskeleton. It is found in the cilium axoneme. The protein localises to the flagellum axoneme. Functionally, microtubule inner protein (MIP) part of the dynein-decorated doublet microtubules (DMTs) in cilia axoneme. Important for proper ciliary and flagellar beating. May act in cooperation with CFAP45 and axonemal dynein subunit DNAH11. May play a role in cell growth and/or survival. The protein is Cilia- and flagella-associated protein 52 of Mus musculus (Mouse).